Consider the following 509-residue polypeptide: Ankyrin repeat domain-containing protein 13C (509 aa).

A compositionally biased stretch (basic and acidic residues) spans 1–19 (MTGEKIRSLHRDQKPSKDE). The tract at residues 1 to 42 (MTGEKIRSLHRDQKPSKDEDLLEPDEEATAGGTFTRTGKLKN) is disordered. 3 ANK repeats span residues 79 to 110 (DAYFPVHECVFKGDIRRLSSLIRSHSIGQKDN), 111 to 140 (HGNTPLHLAVMLGNKECAHLLLAHNAPVKV), and 144 to 173 (QGWSPLAEAISYGDRQMITALLRKLKQQSR).

Its subcellular location is the endoplasmic reticulum membrane. In terms of biological role, acts as a molecular chaperone for G protein-coupled receptors, regulating their biogenesis and exit from the ER. This Xenopus tropicalis (Western clawed frog) protein is Ankyrin repeat domain-containing protein 13C (ankrd13c).